Reading from the N-terminus, the 394-residue chain is Elongation factor Tu 2 (394 aa).

Positions 10–204 constitute a tr-type G domain; sequence KPHVNVGTIG…YLDSYIPEPE (195 aa). The G1 stretch occupies residues 19–26; it reads GHVDHGKT. 19–26 contacts GTP; sequence GHVDHGKT. Residue Thr26 coordinates Mg(2+). The G2 stretch occupies residues 60–64; sequence GITIN. Residues 81–84 form a G3 region; the sequence is DCPG. Residues 81–85 and 136–139 contribute to the GTP site; these read DCPGH and NKCD. Residues 136-139 are G4; that stretch reads NKCD. The G5 stretch occupies residues 174-176; it reads SAL.

This sequence belongs to the TRAFAC class translation factor GTPase superfamily. Classic translation factor GTPase family. EF-Tu/EF-1A subfamily. In terms of assembly, monomer.

The protein resides in the cytoplasm. It catalyses the reaction GTP + H2O = GDP + phosphate + H(+). Its function is as follows. GTP hydrolase that promotes the GTP-dependent binding of aminoacyl-tRNA to the A-site of ribosomes during protein biosynthesis. This chain is Elongation factor Tu 2, found in Yersinia pseudotuberculosis serotype O:1b (strain IP 31758).